Consider the following 103-residue polypeptide: Large ribosomal subunit protein uL24 (103 aa).

The protein belongs to the universal ribosomal protein uL24 family. Part of the 50S ribosomal subunit.

One of two assembly initiator proteins, it binds directly to the 5'-end of the 23S rRNA, where it nucleates assembly of the 50S subunit. Functionally, one of the proteins that surrounds the polypeptide exit tunnel on the outside of the subunit. The chain is Large ribosomal subunit protein uL24 from Dehalococcoides mccartyi (strain ATCC BAA-2100 / JCM 16839 / KCTC 5957 / BAV1).